A 382-amino-acid polypeptide reads, in one-letter code: Methylthioribose-1-phosphate isomerase (382 aa).

Asp-261 serves as the catalytic Proton donor.

It belongs to the eIF-2B alpha/beta/delta subunits family. MtnA subfamily.

It is found in the cytoplasm. The protein localises to the nucleus. The enzyme catalyses 5-(methylsulfanyl)-alpha-D-ribose 1-phosphate = 5-(methylsulfanyl)-D-ribulose 1-phosphate. Its pathway is amino-acid biosynthesis; L-methionine biosynthesis via salvage pathway; L-methionine from S-methyl-5-thio-alpha-D-ribose 1-phosphate: step 1/6. Its function is as follows. Catalyzes the interconversion of methylthioribose-1-phosphate (MTR-1-P) into methylthioribulose-1-phosphate (MTRu-1-P). This is Methylthioribose-1-phosphate isomerase from Ricinus communis (Castor bean).